The sequence spans 800 residues: Protocadherin beta-10 (800 aa).

The N-terminal stretch at 1–26 (MAVRELCFPRQRQVLFLFLFWGVSLA) is a signal peptide. The Extracellular segment spans residues 27 to 692 (GSGFGRYSVT…AEADLLTVYL (666 aa)). Cadherin domains are found at residues 35–133 (VTEE…APVF), 138–242 (TVLK…APQF), 247–347 (YETQ…PPEL), 352–451 (FSNS…APAF), and 456–561 (YTLF…SPFV). N-linked (GlcNAc...) asparagine glycosylation is found at N169 and N181. N-linked (GlcNAc...) asparagine glycans are attached at residues N418 and N436. N-linked (GlcNAc...) asparagine glycosylation is present at N567. The Cadherin 6 domain occupies 568–671 (GSAPCTELVP…LVDGFSQPYL (104 aa)). The chain crosses the membrane as a helical span at residues 693–713 (VVALASVSSLFLLSVLLFVAV). At 714 to 800 (RLCRRSRAAS…FRNSFGFNIQ (87 aa)) the chain is on the cytoplasmic side.

Its subcellular location is the cell membrane. Its function is as follows. Potential calcium-dependent cell-adhesion protein. May be involved in the establishment and maintenance of specific neuronal connections in the brain. This is Protocadherin beta-10 (PCDHB10) from Homo sapiens (Human).